A 183-amino-acid polypeptide reads, in one-letter code: Transmembrane protein 52B (183 aa).

An N-terminal signal peptide occupies residues 1–24; the sequence is MGVRVHVVAASALLYFILLSGTRC. Residues 40–60 form a helical membrane-spanning segment; sequence VHLWYIWLLVVIGALLLLCGL. Residues 158–183 are disordered; that stretch reads DLPPVPEEKQLPPTEKESTRIVDSWN. Residues 163–177 show a composition bias toward basic and acidic residues; it reads PEEKQLPPTEKESTR.

The protein localises to the membrane. The polypeptide is Transmembrane protein 52B (TMEM52B) (Homo sapiens (Human)).